The primary structure comprises 249 residues: Coproheme decarboxylase (249 aa).

Fe-coproporphyrin III is bound by residues Arg-131, Tyr-145–Lys-149, His-172, Gln-185, and Ser-223. Residue Tyr-145 is part of the active site.

Belongs to the ChdC family. Type 1 subfamily. Requires Fe-coproporphyrin III as cofactor.

The catalysed reaction is Fe-coproporphyrin III + 2 H2O2 + 2 H(+) = heme b + 2 CO2 + 4 H2O. The enzyme catalyses Fe-coproporphyrin III + H2O2 + H(+) = harderoheme III + CO2 + 2 H2O. It carries out the reaction harderoheme III + H2O2 + H(+) = heme b + CO2 + 2 H2O. It functions in the pathway porphyrin-containing compound metabolism; protoheme biosynthesis. Functionally, involved in coproporphyrin-dependent heme b biosynthesis. Catalyzes the decarboxylation of Fe-coproporphyrin III (coproheme) to heme b (protoheme IX), the last step of the pathway. The reaction occurs in a stepwise manner with a three-propionate intermediate. In Shouchella clausii (strain KSM-K16) (Alkalihalobacillus clausii), this protein is Coproheme decarboxylase.